Reading from the N-terminus, the 635-residue chain is MVKNLVLWVVVAVIMMTAYQSFNSSSVENSTDYTTFVYDVSNGQVTAARFDANEITVTKTDGSKYSTVMPPLEDKKLLDDLLSKKVKVEGTPFERRGFLSQILISWFPMLFLVGVWVFFMRQMQGGGGKAMSFGKSRAKMLNQDQIKVTFADVAGCDEAKEEVGEIVDFLRDPNKFQNLGGKIPKGILMVGPPGTGKTLLARAIAGEAKVPFFTISGSDFVEMFVGVGASRVRDMFEQAKKNAPCLIFIDEIDAVGRQRGAGLGGGHDEREQTLNQMLVEMDGFSGNDGVIVIAATNRPDVLDPALTRPGRFDRQVVVGLPDVKGREQILKVHMRKVSVAQDVDAMTLARGTPGYSGADLANLVNEAALFAARVNKRTVTMLEFEKAKDKINMGPERRTMIMTDKQKESTAYHEAGHAIVGYLVPEHDPVHKVTIIPRGRALGVTFFLPEGDQISISQKQLESKLSTLYAGRLAEDLIYGEENISTGASNDIKVATNIARNMVTQWGFSEKLGPILYTEDEGEVFLGRSMAKAKHMSDETAHSIDEEVRAIVNRNYARAREILIDNMDILHAMKDALVKYETIEEEQIKQLMNREPVTPPSGWGEPKTQQAAYANSTTNDTKPESAVENTDDFNV.

At 1–4 the chain is on the cytoplasmic side; the sequence is MVKN. The chain crosses the membrane as a helical span at residues 5–25; that stretch reads LVLWVVVAVIMMTAYQSFNSS. Residues 26–97 are Periplasmic-facing; that stretch reads SVENSTDYTT…VEGTPFERRG (72 aa). The helical transmembrane segment at 98–118 threads the bilayer; it reads FLSQILISWFPMLFLVGVWVF. At 119–635 the chain is on the cytoplasmic side; the sequence is FMRQMQGGGG…AVENTDDFNV (517 aa). 191-198 is an ATP binding site; the sequence is GPPGTGKT. His-413 contacts Zn(2+). The active site involves Glu-414. Positions 417 and 491 each coordinate Zn(2+). Residues 593 to 635 form a disordered region; sequence NREPVTPPSGWGEPKTQQAAYANSTTNDTKPESAVENTDDFNV. Residues 607–620 show a composition bias toward polar residues; that stretch reads KTQQAAYANSTTND.

The protein in the central section; belongs to the AAA ATPase family. This sequence in the C-terminal section; belongs to the peptidase M41 family. In terms of assembly, homohexamer. Requires Zn(2+) as cofactor.

The protein resides in the cell inner membrane. In terms of biological role, acts as a processive, ATP-dependent zinc metallopeptidase for both cytoplasmic and membrane proteins. Plays a role in the quality control of integral membrane proteins. The chain is ATP-dependent zinc metalloprotease FtsH from Haemophilus influenzae (strain ATCC 51907 / DSM 11121 / KW20 / Rd).